The sequence spans 693 residues: Elongation factor G (693 aa).

Residues 8-283 enclose the tr-type G domain; that stretch reads NKVRNFGIAA…AVCDYLPSPL (276 aa). Residues 17 to 24, 81 to 85, and 135 to 138 each bind GTP; these read AHIDAGKT, DTPGH, and NKMD.

It belongs to the TRAFAC class translation factor GTPase superfamily. Classic translation factor GTPase family. EF-G/EF-2 subfamily.

It localises to the cytoplasm. Functionally, catalyzes the GTP-dependent ribosomal translocation step during translation elongation. During this step, the ribosome changes from the pre-translocational (PRE) to the post-translocational (POST) state as the newly formed A-site-bound peptidyl-tRNA and P-site-bound deacylated tRNA move to the P and E sites, respectively. Catalyzes the coordinated movement of the two tRNA molecules, the mRNA and conformational changes in the ribosome. In Endomicrobium trichonymphae, this protein is Elongation factor G.